Reading from the N-terminus, the 239-residue chain is Ribonuclease PH (239 aa).

Phosphate is bound by residues arginine 87 and 125 to 127; that span reads GTR.

It belongs to the RNase PH family. Homohexameric ring arranged as a trimer of dimers.

It catalyses the reaction tRNA(n+1) + phosphate = tRNA(n) + a ribonucleoside 5'-diphosphate. Its function is as follows. Phosphorolytic 3'-5' exoribonuclease that plays an important role in tRNA 3'-end maturation. Removes nucleotide residues following the 3'-CCA terminus of tRNAs; can also add nucleotides to the ends of RNA molecules by using nucleoside diphosphates as substrates, but this may not be physiologically important. Probably plays a role in initiation of 16S rRNA degradation (leading to ribosome degradation) during starvation. This chain is Ribonuclease PH, found in Cellvibrio japonicus (strain Ueda107) (Pseudomonas fluorescens subsp. cellulosa).